We begin with the raw amino-acid sequence, 789 residues long: Glycerol-3-phosphate acyltransferase (789 aa).

Residues 276-281 (HRSYID) carry the HXXXXD motif motif.

Belongs to the GPAT/DAPAT family.

The protein localises to the cell membrane. It catalyses the reaction sn-glycerol 3-phosphate + an acyl-CoA = a 1-acyl-sn-glycero-3-phosphate + CoA. Its pathway is phospholipid metabolism; CDP-diacylglycerol biosynthesis; CDP-diacylglycerol from sn-glycerol 3-phosphate: step 1/3. This Mycobacterium bovis (strain ATCC BAA-935 / AF2122/97) protein is Glycerol-3-phosphate acyltransferase.